A 119-amino-acid chain; its full sequence is Autophagy-related protein 8A (119 aa).

The Phosphatidylethanolamine amidated glycine moiety is linked to residue Gly-117. The propeptide at 118–119 is removed in mature form; sequence SA.

The protein belongs to the ATG8 family. In terms of assembly, interacts with ATG4. In terms of processing, the C-terminal 2 residues are removed by ATG4 to expose Gly-117 at the C-terminus. The C-terminal Gly is then amidated with phosphatidylethanolamine by an activating system similar to that for ubiquitin. As to expression, constitutively expressed.

The protein localises to the cytoplasmic vesicle. It is found in the autophagosome membrane. It localises to the vacuole membrane. The protein resides in the cytoplasm. Its subcellular location is the cytoskeleton. Its function is as follows. Ubiquitin-like modifier involved in cytoplasm to vacuole transport (Cvt) vesicles and autophagosomes formation. May mediate the delivery of the vesicles and autophagosomes to the vacuole via the microtubule cytoskeleton. In terms of biological role, ubiquitin-like modifier involved in autophagosomes formation. May mediate the delivery of the autophagosomes to the vacuole via the microtubule cytoskeleton. The chain is Autophagy-related protein 8A (ATG8A) from Oryza sativa subsp. indica (Rice).